Reading from the N-terminus, the 283-residue chain is Arsenite methyltransferase (283 aa).

Belongs to the methyltransferase superfamily. Arsenite methyltransferase family.

It carries out the reaction arsenic triglutathione + [thioredoxin]-dithiol + S-adenosyl-L-methionine + 2 H2O = methylarsonous acid + [thioredoxin]-disulfide + 3 glutathione + S-adenosyl-L-homocysteine + H(+). The catalysed reaction is arsenic triglutathione + 2 [thioredoxin]-dithiol + 2 S-adenosyl-L-methionine + H2O = dimethylarsinous acid + 2 [thioredoxin]-disulfide + 3 glutathione + 2 S-adenosyl-L-homocysteine + 2 H(+). It catalyses the reaction arsenic triglutathione + 3 [thioredoxin]-dithiol + 3 S-adenosyl-L-methionine = trimethylarsine + 3 [thioredoxin]-disulfide + 3 glutathione + 3 S-adenosyl-L-homocysteine + 3 H(+). Functionally, catalyzes the transfer of a methyl group from AdoMet to arsenite, producing methylated arsenicals. Involved in the conversion of As(III) to a number of di- and trimethylated species, with trimethylarsine as the end product. Reduces the arsenic toxicity in the cell and may contribute to the global arsenic cycling. The chain is Arsenite methyltransferase from Rhodopseudomonas palustris (strain ATCC BAA-98 / CGA009).